The sequence spans 88 residues: Stannin (88 aa).

Topologically, residues 1 to 10 (MSIMDHSPTT) are mitochondrial intermembrane. Residues 11–31 (GVVTVIVILIAIAALGALILG) form a helical membrane-spanning segment. Over 32 to 88 (CWCYLRLQRISQSEDEESIVGDGETKEPFLLVQYSAKGPCVERKAKLMTANSPEVHG) the chain is Cytoplasmic. S49 and S83 each carry phosphoserine.

It belongs to the stannin family. In terms of assembly, monomer.

It is found in the mitochondrion outer membrane. Functionally, plays a role in the toxic effects of organotins. Plays a role in endosomal maturation. In Mus musculus (Mouse), this protein is Stannin (Snn).